Consider the following 212-residue polypeptide: Thiamine-phosphate synthase (212 aa).

38–42 (QLREK) contributes to the 4-amino-2-methyl-5-(diphosphooxymethyl)pyrimidine binding site. The Mg(2+) site is built by Asp71 and Asp90. Lys138 contacts 4-amino-2-methyl-5-(diphosphooxymethyl)pyrimidine. Residue Gly166 participates in 2-[(2R,5Z)-2-carboxy-4-methylthiazol-5(2H)-ylidene]ethyl phosphate binding.

This sequence belongs to the thiamine-phosphate synthase family. Mg(2+) is required as a cofactor.

The enzyme catalyses 2-[(2R,5Z)-2-carboxy-4-methylthiazol-5(2H)-ylidene]ethyl phosphate + 4-amino-2-methyl-5-(diphosphooxymethyl)pyrimidine + 2 H(+) = thiamine phosphate + CO2 + diphosphate. The catalysed reaction is 2-(2-carboxy-4-methylthiazol-5-yl)ethyl phosphate + 4-amino-2-methyl-5-(diphosphooxymethyl)pyrimidine + 2 H(+) = thiamine phosphate + CO2 + diphosphate. It catalyses the reaction 4-methyl-5-(2-phosphooxyethyl)-thiazole + 4-amino-2-methyl-5-(diphosphooxymethyl)pyrimidine + H(+) = thiamine phosphate + diphosphate. It participates in cofactor biosynthesis; thiamine diphosphate biosynthesis; thiamine phosphate from 4-amino-2-methyl-5-diphosphomethylpyrimidine and 4-methyl-5-(2-phosphoethyl)-thiazole: step 1/1. In terms of biological role, condenses 4-methyl-5-(beta-hydroxyethyl)thiazole monophosphate (THZ-P) and 2-methyl-4-amino-5-hydroxymethyl pyrimidine pyrophosphate (HMP-PP) to form thiamine monophosphate (TMP). In Chlamydia caviae (strain ATCC VR-813 / DSM 19441 / 03DC25 / GPIC) (Chlamydophila caviae), this protein is Thiamine-phosphate synthase.